We begin with the raw amino-acid sequence, 315 residues long: 4-hydroxy-3-methylbut-2-enyl diphosphate reductase (315 aa).

Cys18 serves as a coordination point for [4Fe-4S] cluster. 2 residues coordinate (2E)-4-hydroxy-3-methylbut-2-enyl diphosphate: His47 and His80. Residues His47 and His80 each contribute to the dimethylallyl diphosphate site. Isopentenyl diphosphate contacts are provided by His47 and His80. Residue Cys102 coordinates [4Fe-4S] cluster. His130 provides a ligand contact to (2E)-4-hydroxy-3-methylbut-2-enyl diphosphate. His130 serves as a coordination point for dimethylallyl diphosphate. His130 is a binding site for isopentenyl diphosphate. Glu132 (proton donor) is an active-site residue. Residue Thr171 participates in (2E)-4-hydroxy-3-methylbut-2-enyl diphosphate binding. Cys201 provides a ligand contact to [4Fe-4S] cluster. Positions 229, 230, 231, and 274 each coordinate (2E)-4-hydroxy-3-methylbut-2-enyl diphosphate. Residues Ser229, Ser230, Asn231, and Ser274 each coordinate dimethylallyl diphosphate. Isopentenyl diphosphate contacts are provided by Ser229, Ser230, Asn231, and Ser274.

This sequence belongs to the IspH family. [4Fe-4S] cluster is required as a cofactor.

The catalysed reaction is isopentenyl diphosphate + 2 oxidized [2Fe-2S]-[ferredoxin] + H2O = (2E)-4-hydroxy-3-methylbut-2-enyl diphosphate + 2 reduced [2Fe-2S]-[ferredoxin] + 2 H(+). It catalyses the reaction dimethylallyl diphosphate + 2 oxidized [2Fe-2S]-[ferredoxin] + H2O = (2E)-4-hydroxy-3-methylbut-2-enyl diphosphate + 2 reduced [2Fe-2S]-[ferredoxin] + 2 H(+). It functions in the pathway isoprenoid biosynthesis; dimethylallyl diphosphate biosynthesis; dimethylallyl diphosphate from (2E)-4-hydroxy-3-methylbutenyl diphosphate: step 1/1. It participates in isoprenoid biosynthesis; isopentenyl diphosphate biosynthesis via DXP pathway; isopentenyl diphosphate from 1-deoxy-D-xylulose 5-phosphate: step 6/6. Functionally, catalyzes the conversion of 1-hydroxy-2-methyl-2-(E)-butenyl 4-diphosphate (HMBPP) into a mixture of isopentenyl diphosphate (IPP) and dimethylallyl diphosphate (DMAPP). Acts in the terminal step of the DOXP/MEP pathway for isoprenoid precursor biosynthesis. This chain is 4-hydroxy-3-methylbut-2-enyl diphosphate reductase, found in Hyphomonas neptunium (strain ATCC 15444).